A 123-amino-acid polypeptide reads, in one-letter code: Large ribosomal subunit protein uL14c (123 aa).

Belongs to the universal ribosomal protein uL14 family. Part of the 50S ribosomal subunit.

The protein resides in the plastid. Its subcellular location is the chloroplast. Functionally, binds to 23S rRNA. This is Large ribosomal subunit protein uL14c from Saccharum hybrid (Sugarcane).